The following is a 263-amino-acid chain: MEIAFDLSTIFTDNIQRLTRTDLLKYGPKRYWAVAQSIDCLGEMSSKFHGWKRVITMYDKIVDHDEEQTTYIMWEKVNGSKSILKGLLRVGYKTLYLTDNEQNQYMEKAMCILDFFVVPTEQRSGNGFKMFDEMLKAENVTVDQCAFDKPSAALQQFLEKYYDRKDLVWQSNKYALCSNFFIGRHPTVPFTPRQTKRASRASSAVSSHASSRNTSPIGRNRPRHDSVADLMRQDMLAGVRAEVDPNSPTGLKNARDFGHRRIW.

Residues 1–181 enclose the N-acetyltransferase domain; it reads MEIAFDLSTI…NKYALCSNFF (181 aa). 115-128 contacts acetyl-CoA; the sequence is FFVVPTEQRSGNGF. 2 disordered regions span residues 191 to 223 and 242 to 263; these read TPRQTKRASRASSAVSSHASSRNTSPIGRNRPR and EVDPNSPTGLKNARDFGHRRIW. The span at 200–212 shows a compositional bias: low complexity; sequence RASSAVSSHASSR. Over residues 253 to 263 the composition is skewed to basic and acidic residues; the sequence is NARDFGHRRIW.

It belongs to the acetyltransferase ATAT1 family. As to expression, expressed in touch receptor neurons and in a subset of ciliated neurons, including PDE, ADE, CEP, and OLQ neurons.

It catalyses the reaction L-lysyl-[alpha-tubulin] + acetyl-CoA = N(6)-acetyl-L-lysyl-[alpha-tubulin] + CoA + H(+). Functionally, specifically acetylates 'Lys-40' in alpha-tubulin/mec-12 on the lumenal side of microtubules. Promotes microtubule destabilization and accelerates microtubule dynamics; this activity may be independent of acetylation activity. Acetylates alpha-tubulin with a slow enzymatic rate, due to a catalytic site that is not optimized for acetyl transfer. Enters the microtubule through each end and diffuses quickly throughout the lumen of microtubules. Acetylates only long/old microtubules because of its slow acetylation rate since it does not have time to act on dynamically unstable microtubules before the enzyme is released. Required for the maintenance of touch receptor neurons and possibly other type of neurons involved in locomotion. The protein is Alpha-tubulin N-acetyltransferase 2 (atat-2) of Caenorhabditis elegans.